The following is a 477-amino-acid chain: Aspartyl/glutamyl-tRNA(Asn/Gln) amidotransferase subunit B (477 aa).

The protein belongs to the GatB/GatE family. GatB subfamily. Heterotrimer of A, B and C subunits.

It catalyses the reaction L-glutamyl-tRNA(Gln) + L-glutamine + ATP + H2O = L-glutaminyl-tRNA(Gln) + L-glutamate + ADP + phosphate + H(+). It carries out the reaction L-aspartyl-tRNA(Asn) + L-glutamine + ATP + H2O = L-asparaginyl-tRNA(Asn) + L-glutamate + ADP + phosphate + 2 H(+). Allows the formation of correctly charged Asn-tRNA(Asn) or Gln-tRNA(Gln) through the transamidation of misacylated Asp-tRNA(Asn) or Glu-tRNA(Gln) in organisms which lack either or both of asparaginyl-tRNA or glutaminyl-tRNA synthetases. The reaction takes place in the presence of glutamine and ATP through an activated phospho-Asp-tRNA(Asn) or phospho-Glu-tRNA(Gln). This chain is Aspartyl/glutamyl-tRNA(Asn/Gln) amidotransferase subunit B, found in Legionella pneumophila subsp. pneumophila (strain Philadelphia 1 / ATCC 33152 / DSM 7513).